Here is a 183-residue protein sequence, read N- to C-terminus: Glutamyl-tRNA(Gln) amidotransferase subunit F, mitochondrial (183 aa).

The protein belongs to the GatF family. As to quaternary structure, subunit of the heterotrimeric GatFAB amidotransferase (AdT) complex, composed of A (HER2), B (PET112) and F (YGR102C) subunits.

It localises to the mitochondrion inner membrane. The enzyme catalyses L-glutamyl-tRNA(Gln) + L-glutamine + ATP + H2O = L-glutaminyl-tRNA(Gln) + L-glutamate + ADP + phosphate + H(+). Functionally, allows the formation of correctly charged Gln-tRNA(Gln) through the transamidation of misacylated Glu-tRNA(Gln) in the mitochondria. The reaction takes place in the presence of glutamine and ATP through an activated gamma-phospho-Glu-tRNA(Gln). Required for proper protein synthesis within the mitochondrion. The protein is Glutamyl-tRNA(Gln) amidotransferase subunit F, mitochondrial of Saccharomyces cerevisiae (strain ATCC 204508 / S288c) (Baker's yeast).